Here is a 2193-residue protein sequence, read N- to C-terminus: Genome polyprotein (2193 aa).

Residues 1–22 form a disordered region; it reads MGSQVSTQRSGSHENSNSATEG. A lipid anchor (N-myristoyl glycine; by host) is attached at G2. The Cytoplasmic portion of the chain corresponds to 2 to 1503; sequence GSQVSTQRSG…HLNRAVLVMQ (1502 aa). Amphipathic alpha-helix regions lie at residues 566–588 and 568–588; these read GDRV…LTPA and RVAD…LTPA. Active-site for protease 2A activity residues include H883 and D901. Residues C918 and C920 each contribute to the Zn(2+) site. Catalysis depends on C972, which acts as the For protease 2A activity. C978 and H980 together coordinate Zn(2+). The tract at residues 1112-1184 is membrane-binding; it reads SASWLKKFND…EQSAASQEDL (73 aa). The tract at residues 1112–1250 is oligomerization; it reads SASWLKKFND…SPGTGKSLAT (139 aa). An RNA-binding region spans residues 1133–1137; that stretch reads FNKIS. One can recognise an SF3 helicase domain in the interval 1216 to 1374; the sequence is EKRMNNYMQF…YKTDLGRLDA (159 aa). 1240–1247 contacts ATP; sequence GSPGTGKS. The Zn(2+) site is built by C1381, C1392, and C1397. The C4-type; degenerate zinc finger occupies 1381 to 1397; it reads CTENNTANFKRCSPLVC. Residues 1424-1431 form an RNA-binding region; the sequence is EYNNRSAI. The segment at 1435–1440 is oligomerization; sequence IEALFQ. An intramembrane segment occupies 1504–1519; it reads SIATVVAVVSLVYVIY. Over 1520–2193 the chain is Cytoplasmic; that stretch reads KLFAGFQGAY…NLRRNWLELF (674 aa). The residue at position 1529 (Y1529) is an O-(5'-phospho-RNA)-tyrosine. In terms of domain architecture, Peptidase C3 spans 1549 to 1727; it reads GPSLDFALSL…FCAGLKRSYF (179 aa). Residues H1588, E1619, and C1695 each act as for protease 3C activity in the active site. The RdRp catalytic domain occupies 1958-2073; it reads GSLFAFDYSG…ASYPFPIDCL (116 aa). Residues D1964 and D2060 each contribute to the Mg(2+) site.

Belongs to the picornaviruses polyprotein family. In terms of assembly, interacts with capsid protein VP1 and capsid protein VP3 to form heterotrimeric protomers. Interacts with capsid protein VP0, and capsid protein VP3 to form heterotrimeric protomers. Five protomers subsequently associate to form pentamers which serve as building blocks for the capsid. Interacts with capsid protein VP2, capsid protein VP3 and capsid protein VP4 following cleavage of capsid protein VP0. Interacts with host SCARB2. Interacts with host ARF6; this interaction mediates viral endocytosis. As to quaternary structure, interacts with capsid protein VP1 and capsid protein VP3 in the mature capsid. Interacts with host SCARB2. In terms of assembly, interacts with capsid protein VP0 and capsid protein VP1 to form heterotrimeric protomers. Five protomers subsequently associate to form pentamers which serve as building blocks for the capsid. Interacts with capsid protein VP4 in the mature capsid. Interacts with protein 2C; this interaction may be important for virion morphogenesis. Interacts with capsid protein VP1 and capsid protein VP3. As to quaternary structure, homodimer. Interacts with host SPOP; this interaction promotes protease 2A ubiquitination and subsequent degradation. In terms of assembly, interacts with host BAX; this interaction activates the mitochondrial apoptotic pathway. Interacts with host ILF2. Homohexamer; forms a hexameric ring structure with 6-fold symmetry characteristic of AAA+ ATPases. Interacts (via N-terminus) with host RTN3 (via reticulon domain); this interaction is important for viral replication. Interacts with capsid protein VP3; this interaction may be important for virion morphogenesis. As to quaternary structure, interacts with protein 3CD. In terms of assembly, homodimer. Interacts with host GBF1. Interacts (via GOLD domain) with host ACBD3 (via GOLD domain); this interaction allows the formation of a viral protein 3A/ACBD3 heterotetramer with a 2:2 stoichiometry, which will stimulate the recruitment of host PI4KB in order to synthesize PI4P at the viral RNA replication sites. Interacts with RNA-directed RNA polymerase. As to quaternary structure, interacts with host IFIH1/MDA5; this interaction inhibits host IFIH1. Interacts with host RIGI. In terms of assembly, interacts with protein 3AB and with RNA-directed RNA polymerase. Interacts with host PPP1R15A. Interacts with Viral protein genome-linked and with protein 3CD. Interacts with host NLRP3. Mg(2+) serves as cofactor. Specific enzymatic cleavages in vivo by the viral proteases yield processing intermediates and the mature proteins. Post-translationally, myristoylation is required for the formation of pentamers during virus assembly. Further assembly of 12 pentamers and a molecule of genomic RNA generates the provirion. In terms of processing, during virion maturation, immature virions are rendered infectious following cleavage of VP0 into VP4 and VP2. This maturation seems to be an autocatalytic event triggered by the presence of RNA in the capsid and it is followed by a conformational change infectious virion. Myristoylation is required during RNA encapsidation and formation of the mature virus particle. Post-translationally, VPg is uridylylated by the polymerase into VPg-pUpU. This acts as a nucleotide-peptide primer for the genomic RNA replication.

The protein resides in the virion. It is found in the host cytoplasm. The protein localises to the host cytoplasmic vesicle membrane. Its subcellular location is the host nucleus. It carries out the reaction a ribonucleoside 5'-triphosphate + H2O = a ribonucleoside 5'-diphosphate + phosphate + H(+). The catalysed reaction is Selective cleavage of Tyr-|-Gly bond in the picornavirus polyprotein.. The enzyme catalyses RNA(n) + a ribonucleoside 5'-triphosphate = RNA(n+1) + diphosphate. It catalyses the reaction Selective cleavage of Gln-|-Gly bond in the poliovirus polyprotein. In other picornavirus reactions Glu may be substituted for Gln, and Ser or Thr for Gly.. Its activity is regulated as follows. Replication or transcription is subject to high level of random mutations by the nucleotide analog ribavirin. Functionally, forms an icosahedral capsid of pseudo T=3 symmetry with capsid proteins VP2 and VP3. The capsid is 300 Angstroms in diameter, composed of 60 copies of each capsid protein and enclosing the viral positive strand RNA genome. Capsid protein VP1 mainly forms the vertices of the capsid. Capsid protein VP1, together with VP2, interacts with host cell receptor SCARB2 to provide virion attachment to target host cells. This attachment induces virion internalization predominantly through clathrin-dependent endocytosis. After binding to its receptor, the capsid undergoes conformational changes. Capsid protein VP1 N-terminus (that contains an amphipathic alpha-helix) and capsid protein VP4 are externalized. Together, they shape a pore in the host membrane through which viral genome is translocated to host cell cytoplasm. Forms an icosahedral capsid of pseudo T=3 symmetry with capsid proteins VP2 and VP3. The capsid is 300 Angstroms in diameter, composed of 60 copies of each capsid protein and enclosing the viral positive strand RNA genome. Capsid protein VP2, together with VP1, interacts with host cell receptor SCARB2 to provide virion attachment to target host cells. In terms of biological role, forms an icosahedral capsid of pseudo T=3 symmetry with capsid proteins VP2 and VP3. The capsid is 300 Angstroms in diameter, composed of 60 copies of each capsid protein and enclosing the viral positive strand RNA genome. Its function is as follows. Lies on the inner surface of the capsid shell. After binding to the host receptor, the capsid undergoes conformational changes. Capsid protein VP4 is released, Capsid protein VP1 N-terminus is externalized, and together, they shape a pore in the host membrane through which the viral genome is translocated into the host cell cytoplasm. Functionally, component of immature procapsids, which is cleaved into capsid proteins VP4 and VP2 after maturation. Allows the capsid to remain inactive before the maturation step. Cysteine protease that cleaves viral polyprotein and specific host proteins. It is responsible for the autocatalytic cleavage between the P1 and P2 regions, which is the first cleavage occurring in the polyprotein. Also cleaves the host translation initiation factor EIF4G1, in order to shut down the capped cellular mRNA translation. Inhibits the host nucleus-cytoplasm protein and RNA trafficking by cleaving host members of the nuclear pores. Counteracts stress granule formation probably by antagonizing its assembly or promoting its dissassembly. Cleaves and inhibits host IFIH1/MDA5, thereby inhibiting the type-I IFN production and the establishment of the antiviral state. Cleaves and inhibits host MAVS, thereby inhibiting the type-I IFN production and the establishment of the antiviral state. In terms of biological role, plays an essential role in the virus replication cycle by acting as a viroporin. Creates a pore in the host endoplasmic reticulum and as a consequence releases Ca2+ in the cytoplasm of infected cell. In turn, high levels of cytoplasmic calcium may trigger membrane trafficking and transport of viral ER-associated proteins to viroplasms, sites of viral genome replication. Also activates the mitochondrial apoptotic pathway by activating host BAX. Its function is as follows. Induces and associates with structural rearrangements of intracellular membranes. Displays RNA-binding, nucleotide binding and NTPase activities. May play a role in virion morphogenesis and viral RNA encapsidation by interacting with the capsid protein VP3. Functionally, localizes the viral replication complex to the surface of membranous vesicles. Together with protein 3CD binds the Cis-Active RNA Element (CRE) which is involved in RNA synthesis initiation. Acts as a cofactor to stimulate the activity of 3D polymerase, maybe through a nucleid acid chaperone activity. Localizes the viral replication complex to the surface of membranous vesicles. It inhibits host cell endoplasmic reticulum-to-Golgi apparatus transport and causes the disassembly of the Golgi complex, possibly through GBF1 interaction. This would result in depletion of MHC, trail receptors and IFN receptors at the host cell surface. Plays an essential role in viral RNA replication by recruiting ACBD3 and PI4KB at the viral replication sites, thereby allowing the formation of the rearranged membranous structures where viral replication takes place. In terms of biological role, acts as a primer for viral RNA replication and remains covalently bound to viral genomic RNA. VPg is uridylylated prior to priming replication into VPg-pUpU. The oriI viral genomic sequence may act as a template for this. The VPg-pUpU is then used as primer on the genomic RNA poly(A) by the RNA-dependent RNA polymerase to replicate the viral genome. During genome replication, the VPg-RNA linkage is removed by the host TDP2, thereby accelerating replication. During the late stage of the replication cycle, host TDP2 is excluded from sites of viral RNA synthesis and encapsidation, allowing for the generation of progeny virions. Its function is as follows. Involved in the viral replication complex and viral polypeptide maturation. It exhibits protease activity with a specificity and catalytic efficiency that is different from protease 3C. Protein 3CD lacks polymerase activity. Protein 3CD binds to the 5'UTR of the viral genome. Regulates host protein expression by interacting with host PPP1R15A to support viral replication. Functionally, major viral protease that mediates proteolytic processing of the polyprotein. Cleaves host EIF5B, contributing to host translation shutoff. Also cleaves host PABPC1, contributing to host translation shutoff. Disassembles host cytoplasmic stress granules by cleaving host G3BP1, although this effect is less prononced than the inhibition induced by protease 2A. Cleaves host RIGI and thus contributes to the inhibition of type I interferon production. Cleaves host IRF7 and thus contributes to the inhibition of type I interferon production. Cleaves host HNRNPA1 thereby increasing the translation of apoptosis protease activating factor APAF1, leading to apoptosis of the host cell. Cleaves host NLRP1, triggers host N-glycine-mediated degradation of the autoinhibitory NLRP1 N-terminal fragment. Cleaves and inactivates host GSDMD, preventing GSDMD-mediated pyroptosis. Also promotes apoptosis in infected cell through cleaving of host PINX1, a telomere binding protein in order to facilitate viral release. Impairs host PML-NBs production via PML cleavage and counter its antiviral activities. Replicates the viral genomic RNA on the surface of intracellular membranes. May form linear arrays of subunits that propagate along a strong head-to-tail interaction called interface-I. Covalently attaches UMP to a tyrosine of VPg, which is used to prime RNA synthesis. The positive stranded RNA genome is first replicated at virus induced membranous vesicles, creating a dsRNA genomic replication form. This dsRNA is then used as template to synthesize positive stranded RNA genomes. ss(+)RNA genomes are either translated, replicated or encapsidated. Facilitates the assembly of NLRP3 inflammasome complex and stimulates the cleavage of host pro-CASP1 and the secretion of IL-1beta. This is Genome polyprotein from Human enterovirus 71 (strain USA/BrCr/1970) (EV71).